A 40-amino-acid polypeptide reads, in one-letter code: Dolichyl-diphosphooligosaccharide--protein glycosyltransferase subunit 4 (40 aa).

At 1-4 (MITD) the chain is on the lumenal side. Residues 5-25 (VQLAIFSNVLGVFLFLLVVAY) form a helical membrane-spanning segment. Residues 26–40 (HYINANTGKSSIKNK) lie on the Cytoplasmic side of the membrane.

Belongs to the OST4 family. Component of the oligosaccharyltransferase (OST) complex.

It localises to the endoplasmic reticulum membrane. Subunit of the oligosaccharyl transferase (OST) complex that catalyzes the initial transfer of a defined glycan (Glc(3)Man(9)GlcNAc(2) in eukaryotes) from the lipid carrier dolichol-pyrophosphate to an asparagine residue within an Asn-X-Ser/Thr consensus motif in nascent polypeptide chains, the first step in protein N-glycosylation. N-glycosylation occurs cotranslationally and the complex associates with the Sec61 complex at the channel-forming translocon complex that mediates protein translocation across the endoplasmic reticulum (ER). All subunits are required for a maximal enzyme activity. The chain is Dolichyl-diphosphooligosaccharide--protein glycosyltransferase subunit 4 from Drosophila mojavensis (Fruit fly).